We begin with the raw amino-acid sequence, 43 residues long: Protein PsbN (43 aa).

A helical membrane pass occupies residues 4–24 (ATIIVIFVSSLLLGITAYSIY).

This sequence belongs to the PsbN family.

It is found in the plastid. It localises to the chloroplast thylakoid membrane. Its function is as follows. May play a role in photosystem I and II biogenesis. This Trieres chinensis (Marine centric diatom) protein is Protein PsbN.